A 222-amino-acid chain; its full sequence is MSHLVKMENGQSQTIQEMLGCIERYNPDHLKTLEAYVQDQAKNNTYDLEANLAVLKLYQFNPHMLNIDITYTILLKSLTSLPHTDFVMAKCLLLPQQMKDENVQTIIDLADILERADFTLFWQRAEVNRNMFRHIAGFHDSIRKFVSHVVSTTFQTIRKDLLKELLGGIEDSTLESWIKRNGWKHQGQGLVVVAMQDDKIKTKNITEKIEFDNVGGLMAQCL.

The region spanning 46 to 208 is the PCI domain; the sequence is YDLEANLAVL…KIKTKNITEK (163 aa).

Belongs to the eIF-3 subunit K family. As to quaternary structure, component of the eukaryotic translation initiation factor 3 (eIF-3) complex. The eIF-3 complex interacts with pix.

It localises to the cytoplasm. In terms of biological role, component of the eukaryotic translation initiation factor 3 (eIF-3) complex, which is involved in protein synthesis of a specialized repertoire of mRNAs and, together with other initiation factors, stimulates binding of mRNA and methionyl-tRNAi to the 40S ribosome. The eIF-3 complex specifically targets and initiates translation of a subset of mRNAs involved in cell proliferation. In Drosophila erecta (Fruit fly), this protein is Eukaryotic translation initiation factor 3 subunit K.